The chain runs to 313 residues: MGNEFQHRTVLLDEAVDALVTRPDGVYVDGTFGRGGHSRAVLARLGDAGRLIAFDKDPRAIETAESIEDARFEIVHDSFAAMKGALDARGVGRVSGVLLDLGVSSPQVDDPARGFSFRANGPLDMRMDPTRGESAAEWLARASVQELTEVIRDYGEERFAFQIAKAIVARRAESDRLGPLDSTGELAQIVGHVVKTREKGKDPATRTFQAIRIHVNQELADLQVVLEAALSLLEQGGRLVVISFHSLEDRIVKRFLQAHASAPAVDRRLPIRAADLPRPPLKLLGRMFPNDAEVAANPRARSAVMRIAERVAP.

Residues 35–37 (GGH), aspartate 55, phenylalanine 79, aspartate 100, and glutamine 107 contribute to the S-adenosyl-L-methionine site.

The protein belongs to the methyltransferase superfamily. RsmH family.

The protein localises to the cytoplasm. The catalysed reaction is cytidine(1402) in 16S rRNA + S-adenosyl-L-methionine = N(4)-methylcytidine(1402) in 16S rRNA + S-adenosyl-L-homocysteine + H(+). Its function is as follows. Specifically methylates the N4 position of cytidine in position 1402 (C1402) of 16S rRNA. In Burkholderia mallei (strain NCTC 10247), this protein is Ribosomal RNA small subunit methyltransferase H.